The chain runs to 142 residues: Cytochrome b5-related protein (142 aa).

The region spanning 16-100 (PTYRNSAPVT…IAKYKVRDAY (85 aa)) is the Cytochrome b5 heme-binding domain. Heme contacts are provided by histidine 59 and histidine 82.

Belongs to the cytochrome b5 family.

Its function is as follows. May play a role in muscle cell metabolism. The protein is Cytochrome b5-related protein (Cyt-b5-r) of Drosophila virilis (Fruit fly).